The sequence spans 111 residues: WAP four-disulfide core domain protein 12 (111 aa).

The signal sequence occupies residues 1 to 23 (MGSSSFLVLMVSLVLVTLVAVEG). The region spanning 27–74 (GIEKAGVCPADNVRCFKSDPPQCHTDQDCLGERKCCYLHCGFKCVIPV) is the WAP domain. Cystine bridges form between Cys-34–Cys-62, Cys-41–Cys-66, Cys-49–Cys-61, and Cys-55–Cys-70. Residues 80 to 111 (GGNKDEDVSRPYPEPGWEAKCPGSSSTRCPQK) are disordered. The span at 102 to 111 (GSSSTRCPQK) shows a compositional bias: polar residues.

Highly expressed in prostate, skin, lung and esophagus. Weakly expressed in skeletal muscle, epididymis, kidney, trachea, salivary gland, testis and seminal vesicle.

The protein localises to the secreted. Functionally, antibacterial protein. Putative acid-stable proteinase inhibitor. The chain is WAP four-disulfide core domain protein 12 (WFDC12) from Homo sapiens (Human).